We begin with the raw amino-acid sequence, 311 residues long: Protein lifeguard 3 (311 aa).

Disordered regions lie at residues 1–37 (MSNP…GGYP) and 50–72 (PAGY…PGHG). Residues 53-62 (YPQPMPPTHP) show a composition bias toward pro residues. Serine 81 and serine 83 each carry phosphoserine. A run of 7 helical transmembrane segments spans residues 110-130 (LLIT…SAFV), 134-154 (VAVY…LACC), 165-185 (IILL…ISSM), 190-210 (AVII…IFCF), 221-241 (GLFC…SIVL), 246-266 (VYWL…LFLA), and 286-306 (ITGA…VLQL).

Belongs to the BI1 family. LFG subfamily.

It is found in the membrane. The protein localises to the lysosome membrane. Its subcellular location is the endosome membrane. Negatively regulates aortic matrix metalloproteinase-9 (MMP9) production and may play a protective role in vascular remodeling. This Homo sapiens (Human) protein is Protein lifeguard 3 (TMBIM1).